Here is a 508-residue protein sequence, read N- to C-terminus: Photosystem II CP47 reaction center protein (508 aa).

6 helical membrane passes run 21-36 (AVHI…WAGS), 101-115 (IVFS…IWHW), 140-156 (GIHL…FGAF), 203-218 (IAAG…FHLS), 237-252 (VLSS…AFVV), and 457-472 (TFAL…HGAR).

It belongs to the PsbB/PsbC family. PsbB subfamily. PSII is composed of 1 copy each of membrane proteins PsbA, PsbB, PsbC, PsbD, PsbE, PsbF, PsbH, PsbI, PsbJ, PsbK, PsbL, PsbM, PsbT, PsbX, PsbY, PsbZ, Psb30/Ycf12, at least 3 peripheral proteins of the oxygen-evolving complex and a large number of cofactors. It forms dimeric complexes. Binds multiple chlorophylls. PSII binds additional chlorophylls, carotenoids and specific lipids. is required as a cofactor.

The protein resides in the plastid. It localises to the chloroplast thylakoid membrane. In terms of biological role, one of the components of the core complex of photosystem II (PSII). It binds chlorophyll and helps catalyze the primary light-induced photochemical processes of PSII. PSII is a light-driven water:plastoquinone oxidoreductase, using light energy to abstract electrons from H(2)O, generating O(2) and a proton gradient subsequently used for ATP formation. The sequence is that of Photosystem II CP47 reaction center protein from Triticum aestivum (Wheat).